Here is a 202-residue protein sequence, read N- to C-terminus: Holliday junction branch migration complex subunit RuvA (202 aa).

The tract at residues 1-65 (MIGYLEGRVV…EDALELFGFA (65 aa)) is domain I. The tract at residues 66–144 (SLDDRETFRT…GRAPAAGLAP (79 aa)) is domain II. Residues 145–155 (SVPIPGGVAGD) are flexible linker. The domain III stretch occupies residues 155-202 (DVVAGLTNLGYPEPEARQVAAEVLEAEPDLDVAAALRQALKRLASAKK).

The protein belongs to the RuvA family. In terms of assembly, homotetramer. Forms an RuvA(8)-RuvB(12)-Holliday junction (HJ) complex. HJ DNA is sandwiched between 2 RuvA tetramers; dsDNA enters through RuvA and exits via RuvB. An RuvB hexamer assembles on each DNA strand where it exits the tetramer. Each RuvB hexamer is contacted by two RuvA subunits (via domain III) on 2 adjacent RuvB subunits; this complex drives branch migration. In the full resolvosome a probable DNA-RuvA(4)-RuvB(12)-RuvC(2) complex forms which resolves the HJ.

The protein localises to the cytoplasm. Its function is as follows. The RuvA-RuvB-RuvC complex processes Holliday junction (HJ) DNA during genetic recombination and DNA repair, while the RuvA-RuvB complex plays an important role in the rescue of blocked DNA replication forks via replication fork reversal (RFR). RuvA specifically binds to HJ cruciform DNA, conferring on it an open structure. The RuvB hexamer acts as an ATP-dependent pump, pulling dsDNA into and through the RuvAB complex. HJ branch migration allows RuvC to scan DNA until it finds its consensus sequence, where it cleaves and resolves the cruciform DNA. The protein is Holliday junction branch migration complex subunit RuvA of Solidesulfovibrio magneticus (strain ATCC 700980 / DSM 13731 / RS-1) (Desulfovibrio magneticus).